A 368-amino-acid polypeptide reads, in one-letter code: tRNA-specific 2-thiouridylase MnmA (368 aa).

ATP is bound by residues 12–19 and Met38; that span reads GMSGGVDS. The tract at residues 98-100 is interaction with target base in tRNA; sequence NPD. Catalysis depends on Cys103, which acts as the Nucleophile. The cysteines at positions 103 and 200 are disulfide-linked. Gly128 lines the ATP pocket. The interaction with tRNA stretch occupies residues 150–152; the sequence is KDQ. Cys200 serves as the catalytic Cysteine persulfide intermediate. The interval 313–314 is interaction with tRNA; the sequence is RY.

The protein belongs to the MnmA/TRMU family. As to quaternary structure, interacts with TusE.

The protein resides in the cytoplasm. The catalysed reaction is S-sulfanyl-L-cysteinyl-[protein] + uridine(34) in tRNA + AH2 + ATP = 2-thiouridine(34) in tRNA + L-cysteinyl-[protein] + A + AMP + diphosphate + H(+). Functionally, catalyzes the 2-thiolation of uridine at the wobble position (U34) of tRNA(Lys), tRNA(Glu) and tRNA(Gln), leading to the formation of s(2)U34, the first step of tRNA-mnm(5)s(2)U34 synthesis. Sulfur is provided by IscS, via a sulfur-relay system. Binds ATP and its substrate tRNAs. This chain is tRNA-specific 2-thiouridylase MnmA, found in Pectobacterium carotovorum subsp. carotovorum (strain PC1).